Consider the following 271-residue polypeptide: Interleukin-1 alpha (271 aa).

Residues 1–112 (MAKVPDMFED…DSEEEIIKPR (112 aa)) constitute a propeptide that is removed on maturation. Lys-82 is subject to N6-acetyllysine. Residues Lys-82 and Lys-83 are each lipidated (N6-myristoyl lysine). The segment at 82-86 (KKRRL) is nuclear localization signal (NLS). The residue at position 87 (Ser-87) is a Phosphoserine. N-linked (GlcNAc...) asparagine glycosylation is found at Asn-102 and Asn-141.

Belongs to the IL-1 family. In terms of assembly, monomer. Interacts with TMED10; the interaction mediates the translocation from the cytoplasm into the ERGIC (endoplasmic reticulum-Golgi intermediate compartment) and thereby secretion. Interacts with IL1R1. Interacts with S100A13; this interaction is the first step in the export of IL1A, followed by direct translocation of this complex across the plasma membrane. Acetylated within its nuclear localization sequence, which impacts subcellular localization. Post-translationally, proteolytic processed by CAPN1 in a calcium-dependent manner. Cleavage from 31 kDa precursor to 18 kDa biologically active molecules. In terms of processing, phosphorylated. Phosphorylation greatly enhances susceptibility to digestion and promotes the conversion of pre-IL1A alpha to the biologically active IL1A.

Its subcellular location is the nucleus. It is found in the cytoplasm. The protein resides in the secreted. Cytokine constitutively present intracellularly in nearly all resting non-hematopoietic cells that plays an important role in inflammation and bridges the innate and adaptive immune systems. After binding to its receptor IL1R1 together with its accessory protein IL1RAP, forms the high affinity interleukin-1 receptor complex. Signaling involves the recruitment of adapter molecules such as MYD88, IRAK1 or IRAK4. In turn, mediates the activation of NF-kappa-B and the three MAPK pathways p38, p42/p44 and JNK pathways. Within the cell, acts as an alarmin and cell death results in its liberation in the extracellular space after disruption of the cell membrane to induce inflammation and alert the host to injury or damage. In addition to its role as a danger signal, which occurs when the cytokine is passively released by cell necrosis, directly senses DNA damage and acts as a signal for genotoxic stress without loss of cell integrity. The polypeptide is Interleukin-1 alpha (IL1A) (Homo sapiens (Human)).